A 180-amino-acid chain; its full sequence is Small ribosomal subunit protein uS4 (180 aa).

Positions 102–174 (RRLQTMLVRK…PARKLEQKEE (73 aa)) constitute an S4 RNA-binding domain. The disordered stretch occupies residues 154–180 (VPFSPLANPEHPARKLEQKEETNEESA). Basic and acidic residues predominate over residues 164–174 (HPARKLEQKEE).

The protein belongs to the universal ribosomal protein uS4 family. As to quaternary structure, part of the 30S ribosomal subunit. Contacts protein S5. The interaction surface between S4 and S5 is involved in control of translational fidelity.

Its function is as follows. One of the primary rRNA binding proteins, it binds directly to 16S rRNA where it nucleates assembly of the body of the 30S subunit. With S5 and S12 plays an important role in translational accuracy. The chain is Small ribosomal subunit protein uS4 from Nanoarchaeum equitans (strain Kin4-M).